Consider the following 545-residue polypeptide: Glucose starvation modulator protein 1 (545 aa).

The zn(2)-C6 fungal-type DNA-binding region spans 20-48 (CGFCHEKHLQCDVGRPCQNCRKRNIASFC). The segment covering 51 to 60 (KVKRRRKRKR) has biased composition (basic residues). Disordered regions lie at residues 51–131 (KVKR…AMKD) and 228–270 (YISL…WQQQ). The segment covering 61–71 (SDASNFDKDEA) has biased composition (basic and acidic residues). The segment covering 72–92 (ATQTLNFNTVNPGEGSSSAMT) has biased composition (polar residues). Residues 98–110 (TGTTTATTTRTTT) show a composition bias toward low complexity. Polar residues predominate over residues 111-125 (NFRSESKASSSTENI). The span at 257–270 (QQKESQQMQLWQQQ) shows a compositional bias: low complexity. The region spanning 416–486 (ELENMSKLVN…DLFHEHLAFG (71 aa)) is the PAS domain.

It belongs to the ERT1/acuK family.

It localises to the nucleus. Its function is as follows. Transcription factor which regulates nonfermentable carbon utilization. This chain is Glucose starvation modulator protein 1 (GSM1), found in Zygosaccharomyces rouxii (strain ATCC 2623 / CBS 732 / NBRC 1130 / NCYC 568 / NRRL Y-229).